We begin with the raw amino-acid sequence, 298 residues long: GTP cyclohydrolase FolE2 (298 aa).

This sequence belongs to the GTP cyclohydrolase IV family.

It catalyses the reaction GTP + H2O = 7,8-dihydroneopterin 3'-triphosphate + formate + H(+). Its pathway is cofactor biosynthesis; 7,8-dihydroneopterin triphosphate biosynthesis; 7,8-dihydroneopterin triphosphate from GTP: step 1/1. In terms of biological role, converts GTP to 7,8-dihydroneopterin triphosphate. This Neisseria meningitidis serogroup A / serotype 4A (strain DSM 15465 / Z2491) protein is GTP cyclohydrolase FolE2.